The primary structure comprises 352 residues: N-acetyl-gamma-glutamyl-phosphate reductase (352 aa).

The active site involves C156.

This sequence belongs to the NAGSA dehydrogenase family. Type 1 subfamily.

The protein localises to the cytoplasm. It carries out the reaction N-acetyl-L-glutamate 5-semialdehyde + phosphate + NADP(+) = N-acetyl-L-glutamyl 5-phosphate + NADPH + H(+). It participates in amino-acid biosynthesis; L-arginine biosynthesis; N(2)-acetyl-L-ornithine from L-glutamate: step 3/4. In terms of biological role, catalyzes the NADPH-dependent reduction of N-acetyl-5-glutamyl phosphate to yield N-acetyl-L-glutamate 5-semialdehyde. This is N-acetyl-gamma-glutamyl-phosphate reductase from Afipia carboxidovorans (strain ATCC 49405 / DSM 1227 / KCTC 32145 / OM5) (Oligotropha carboxidovorans).